Consider the following 500-residue polypeptide: Potassium voltage-gated channel subfamily V member 1 (500 aa).

At 1–210 (MPSSGRALLD…EKPGSSTAAR (210 aa)) the chain is on the cytoplasmic side. Over residues 168–181 (KKDTEDQESQHESE) the composition is skewed to basic and acidic residues. The segment at 168 to 189 (KKDTEDQESQHESEQDFSQGPC) is disordered. A helical membrane pass occupies residues 211–231 (IFGVISIIFVVVSIINMALMS). At 232-238 (AELSWLD) the chain is on the extracellular side. A helical membrane pass occupies residues 239–259 (LQLLEILEYVCISWFTGEFVL). Residues 260–276 (RFLCVRDRCRFLRKVPN) lie on the Cytoplasmic side of the membrane. Residues 277–297 (IIDLLAILPFYITLLVESLSG) traverse the membrane as a helical segment. Topologically, residues 298–309 (SQTTQELENVGR) are extracellular. Residues 310–331 (IVQVLRLLRALRMLKLGRHSTG) traverse the membrane as a helical; Voltage-sensor segment. Residues 332 to 345 (LRSLGMTITQCYEE) lie on the Cytoplasmic side of the membrane. A helical transmembrane segment spans residues 346–366 (VGLLLLFLSVGISIFSTVEYF). The Selectivity filter motif lies at 392 to 397 (TVGYGD). A helical transmembrane segment spans residues 407 to 427 (IVAFMCILSGILVLALPIAII). Topologically, residues 428 to 500 (NDRFSACYFT…RSSGGDDFWF (73 aa)) are cytoplasmic.

Belongs to the potassium channel family. V (TC 1.A.1.2) subfamily. Kv8.1/KCNV1 sub-subfamily. Heteromultimer with KCNB1 and KCNB2. Interacts with KCNC4 and KCND1. Detected in brain.

It is found in the cell membrane. Potassium channel subunit that does not form functional channels by itself. Modulates KCNB1 and KCNB2 channel activity by shifting the threshold for inactivation to more negative values and by slowing the rate of inactivation. Can down-regulate the channel activity of KCNB1, KCNB2, KCNC4 and KCND1, possibly by trapping them in intracellular membranes. In Homo sapiens (Human), this protein is Potassium voltage-gated channel subfamily V member 1 (KCNV1).